Consider the following 446-residue polypeptide: Putative ZDHHC-type palmitoyltransferase 2 (446 aa).

2 disordered regions span residues 1-33 (MNLYNNSNSSGSSNSSSSSNNKTNIDYNDINNN) and 56-83 (QIINKNNNNNHNRNNNNNNNNNNNHNNP). N-linked (GlcNAc...) asparagine glycans are attached at residues asparagine 5, asparagine 8, asparagine 14, and asparagine 21. The span at 56–81 (QIINKNNNNNHNRNNNNNNNNNNNHN) shows a compositional bias: low complexity. N-linked (GlcNAc...) asparagine glycans are attached at residues asparagine 141, asparagine 145, asparagine 159, and asparagine 165. The next 5 membrane-spanning stretches (helical) occupy residues 178-198 (IVIFLILVPYIYILNFAIFPW), 210-230 (IHSFISMALVIQMLCNYYLCS), 305-325 (YFVLFLFYTSISIIYFFTLLI), 349-369 (LFLLGILIIILIIAGISIMAL), and 410-430 (IISNFSIVFGNLSFLWLLPTI). Residues 261–311 (KWCNKCNHQKPERAHHCRYCNRCVLRMDHHCQWLQNCIGLFNQKYFVLFLF) enclose the DHHC domain.

It belongs to the DHHC palmitoyltransferase family.

The protein localises to the membrane. The catalysed reaction is L-cysteinyl-[protein] + hexadecanoyl-CoA = S-hexadecanoyl-L-cysteinyl-[protein] + CoA. This Dictyostelium discoideum (Social amoeba) protein is Putative ZDHHC-type palmitoyltransferase 2.